Reading from the N-terminus, the 555-residue chain is O-fucosyltransferase 20 (555 aa).

At 1–58 (MALPKNGGNSSSTKKKVSYISVPSQIINSLSSSSLQSLLVSPKKSSRCTNRFSYRNPR) the chain is on the cytoplasmic side. The chain crosses the membrane as a helical; Signal-anchor for type II membrane protein span at residues 59–79 (IWFLTLFLVSLFGMLKLGLNV). At 80–555 (DPISLPFSRY…MCSDRRQQQQ (476 aa)) the chain is on the lumenal side. The segment at 110–130 (KNDTQSSSSSEHRKNETLPTE) is disordered. Residues Asn111 and Asn124 are each glycosylated (N-linked (GlcNAc...) asparagine). 330–332 (HLR) contributes to the substrate binding site. N-linked (GlcNAc...) asparagine glycans are attached at residues Asn371 and Asn503. Residues 525 to 555 (QPELRTGRGGKDVTKHPVSECMCSDRRQQQQ) are disordered. Positions 529–555 (RTGRGGKDVTKHPVSECMCSDRRQQQQ) are enriched in basic and acidic residues.

This sequence belongs to the glycosyltransferase GT106 family. As to expression, highly expressed in embryogenic microspore and in vegetative tissues.

Its subcellular location is the golgi apparatus membrane. Its pathway is glycan metabolism. In terms of biological role, may play a role in the biosynthesis of matrix polysaccharides and contribute to the biomechanics and development of the plant cell wall. The chain is O-fucosyltransferase 20 from Brassica napus (Rape).